Reading from the N-terminus, the 388-residue chain is Succinate--CoA ligase [ADP-forming] subunit beta (388 aa).

Residues 9–244 (KQLFAEFGLP…PSQEDEREAH (236 aa)) enclose the ATP-grasp domain. ATP is bound by residues lysine 46, 53–55 (GRG), glutamate 99, serine 102, and glutamate 107. Asparagine 199 and aspartate 213 together coordinate Mg(2+). Substrate-binding positions include asparagine 264 and 321 to 323 (GIV).

Belongs to the succinate/malate CoA ligase beta subunit family. As to quaternary structure, heterotetramer of two alpha and two beta subunits. It depends on Mg(2+) as a cofactor.

The catalysed reaction is succinate + ATP + CoA = succinyl-CoA + ADP + phosphate. The enzyme catalyses GTP + succinate + CoA = succinyl-CoA + GDP + phosphate. It functions in the pathway carbohydrate metabolism; tricarboxylic acid cycle; succinate from succinyl-CoA (ligase route): step 1/1. Functionally, succinyl-CoA synthetase functions in the citric acid cycle (TCA), coupling the hydrolysis of succinyl-CoA to the synthesis of either ATP or GTP and thus represents the only step of substrate-level phosphorylation in the TCA. The beta subunit provides nucleotide specificity of the enzyme and binds the substrate succinate, while the binding sites for coenzyme A and phosphate are found in the alpha subunit. In Vibrio atlanticus (strain LGP32) (Vibrio splendidus (strain Mel32)), this protein is Succinate--CoA ligase [ADP-forming] subunit beta.